A 378-amino-acid polypeptide reads, in one-letter code: Spermidine/putrescine import ATP-binding protein PotA (378 aa).

In terms of domain architecture, ABC transporter spans 18–248; sequence VLLSGISKSF…PKNLFVAGFI (231 aa). Residue 50–57 participates in ATP binding; the sequence is GPSGCGKT.

This sequence belongs to the ABC transporter superfamily. Spermidine/putrescine importer (TC 3.A.1.11.1) family. As to quaternary structure, the complex is composed of two ATP-binding proteins (PotA), two transmembrane proteins (PotB and PotC) and a solute-binding protein (PotD).

It localises to the cell inner membrane. It catalyses the reaction ATP + H2O + polyamine-[polyamine-binding protein]Side 1 = ADP + phosphate + polyamineSide 2 + [polyamine-binding protein]Side 1.. In terms of biological role, part of the ABC transporter complex PotABCD involved in spermidine/putrescine import. Responsible for energy coupling to the transport system. The chain is Spermidine/putrescine import ATP-binding protein PotA from Salmonella choleraesuis (strain SC-B67).